Consider the following 208-residue polypeptide: ATP phosphoribosyltransferase (208 aa).

The protein belongs to the ATP phosphoribosyltransferase family. Short subfamily. In terms of assembly, heteromultimer composed of HisG and HisZ subunits.

The protein localises to the cytoplasm. It catalyses the reaction 1-(5-phospho-beta-D-ribosyl)-ATP + diphosphate = 5-phospho-alpha-D-ribose 1-diphosphate + ATP. It functions in the pathway amino-acid biosynthesis; L-histidine biosynthesis; L-histidine from 5-phospho-alpha-D-ribose 1-diphosphate: step 1/9. Functionally, catalyzes the condensation of ATP and 5-phosphoribose 1-diphosphate to form N'-(5'-phosphoribosyl)-ATP (PR-ATP). Has a crucial role in the pathway because the rate of histidine biosynthesis seems to be controlled primarily by regulation of HisG enzymatic activity. This Thermotoga maritima (strain ATCC 43589 / DSM 3109 / JCM 10099 / NBRC 100826 / MSB8) protein is ATP phosphoribosyltransferase (hisG).